Consider the following 2032-residue polypeptide: Cytoskeleton-associated protein 5 (2032 aa).

TOG stretches follow at residues 1–223 and 268–502; these read MGDD…KLPT and YELL…LIHG. N6-acetyllysine is present on Lys-48. HEAT repeat units lie at residues 159 to 197, 356 to 394, and 434 to 472; these read IILL…WIRD, GQYA…TTTL, and KSLL…VVGE. Residues 516 to 579 are disordered; sequence PLPGRTAASG…GTKNKKGLET (64 aa). The span at 543–554 shows a compositional bias: low complexity; the sequence is LKKAPAAKAGGP. The segment at 588–817 is TOG 3; the sequence is SIEVCEEKAS…EFEKMQGQSP (230 aa). An HEAT 4 repeat occupies 750–788; sequence GLNVKAFISNVKTALAATNPAVRTAAITLLGVMYLYVGP. The tract at residues 811–851 is disordered; it reads KMQGQSPPAPTRGISKHSTSGTDEGEDGDEPDDGSNDVVDL. 2 positions are modified to phosphoserine: Ser-816 and Ser-845. Residues 833-845 show a composition bias toward acidic residues; the sequence is DEGEDGDEPDDGS. TOG regions lie at residues 853–1081 and 1193–1428; these read PRTE…VNMP and IEQL…KRPS. HEAT repeat units follow at residues 855-893, 936-974, and 1013-1051; these read TEIS…DAKF, KQHV…QTGM, and PTDL…HLGY. The interval 1077 to 1160 is disordered; the sequence is KVNMPAKPAP…KEDEDKSGPI (84 aa). HEAT repeat units lie at residues 1284–1322, 1324–1357, and 1361–1399; these read ENEA…VYPA, KMFP…SYGM, and QPTP…VHGD. A disordered region spans residues 1422 to 1443; that stretch reads RSAKRPSAAPIKQVEEKPQRAQ. At Ser-1469 the chain carries Phosphoserine. Positions 1801-1822 are disordered; it reads SMDQTGSKSDKETEKGASRIDE. Residues 1808–1822 show a composition bias toward basic and acidic residues; it reads KSDKETEKGASRIDE. Phosphoserine is present on Ser-1861. Residues 1932 to 1957 are interaction with TACC3; that stretch reads PSVYLERLKILRQRCGLDNTKQDDRP. The tract at residues 1949–2032 is disordered; it reads DNTKQDDRPP…RLERIKSSRK (84 aa). Polar residues predominate over residues 1971–1983; sequence VASSTDMLHSKLS. The segment covering 1984-1997 has biased composition (basic and acidic residues); sequence QLRESREQHQHSDL. The segment covering 2002–2014 has biased composition (low complexity); it reads THSSGTVTSSSST. The span at 2018 to 2032 shows a compositional bias: basic and acidic residues; it reads DDLKKRLERIKSSRK.

This sequence belongs to the TOG/XMAP215 family. As to quaternary structure, interacts with TACC1. Interacts with SLAIN2 and SLAIN1. Interacts with HNRNPA2B1. Interacts with TACC3 independently of clathrin. Interacts with TACC3 and clathrin forming the TACC3/ch-TOG/clathrin complex located at spindle inter-microtubules bridges. Interacts with NDC80; indicative for an association with the NDC80 complex. As to expression, overexpressed in hepatomas and colonic tumors. Also expressed in skeletal muscle, brain, heart, placenta, lung, liver, kidney and pancreas. Expression is elevated in the brain; highly expressed in the Purkinje cell bodies of the cerebellum.

The protein resides in the cytoplasm. Its subcellular location is the cytoskeleton. It localises to the microtubule organizing center. It is found in the centrosome. The protein localises to the spindle pole. The protein resides in the spindle. Its subcellular location is the chromosome. It localises to the centromere. It is found in the kinetochore. In terms of biological role, binds to the plus end of microtubules and regulates microtubule dynamics and microtubule organization. Acts as a processive microtubule polymerase. Promotes cytoplasmic microtubule nucleation and elongation. Plays a major role in organizing spindle poles. In spindle formation protects kinetochore microtubules from depolymerization by KIF2C and has an essential role in centrosomal microtubule assembly independently of KIF2C activity. Contributes to centrosome integrity. Acts as a component of the TACC3/ch-TOG/clathrin complex proposed to contribute to stabilization of kinetochore fibers of the mitotic spindle by acting as inter-microtubule bridge. The TACC3/ch-TOG/clathrin complex is required for the maintenance of kinetochore fiber tension. Enhances the strength of NDC80 complex-mediated kinetochore-tip microtubule attachments. The sequence is that of Cytoskeleton-associated protein 5 (CKAP5) from Homo sapiens (Human).